The primary structure comprises 147 residues: Large ribosomal subunit protein uL15 (147 aa).

Residues 1–58 form a disordered region; the sequence is MRLHDLKPAEGSTKKKKRVGRGIGSGHGKTSGRGHKGQNARSGGGVRPGFEGGQMPLT. A compositionally biased stretch (gly residues) spans 42–52; the sequence is SGGGVRPGFEG.

The protein belongs to the universal ribosomal protein uL15 family. As to quaternary structure, part of the 50S ribosomal subunit.

Binds to the 23S rRNA. The sequence is that of Large ribosomal subunit protein uL15 from Caldanaerobacter subterraneus subsp. tengcongensis (strain DSM 15242 / JCM 11007 / NBRC 100824 / MB4) (Thermoanaerobacter tengcongensis).